The chain runs to 202 residues: S-modulin (202 aa).

Gly2 carries N-myristoyl glycine lipidation. 4 consecutive EF-hand domains span residues 25–60 (QEEL…FPDA), 61–96 (DPKA…TSSG), 97–132 (KANQ…IFKM), and 147–182 (TPEK…NKEI). The Ca(2+) site is built by Asp74, Asn76, Asp78, Thr80, Glu85, Asp110, Asp112, Asn114, Thr116, and Glu121.

The protein belongs to the recoverin family. Post-translationally, the N-terminus is blocked.

Functionally, calcium-dependent regulator of light sensitivity of cGMP phosphodiesterase in rod outer segments. Controls rhodopsin phosphorylation in a Ca(2+)-dependent manner. In Aquarana catesbeiana (American bullfrog), this protein is S-modulin.